The sequence spans 347 residues: uncharacterized protein (347 aa).

This sequence belongs to the MG067/MG068/MG395 family.

This is an uncharacterized protein from Mycoplasma pneumoniae (strain ATCC 29342 / M129 / Subtype 1) (Mycoplasmoides pneumoniae).